A 71-amino-acid polypeptide reads, in one-letter code: Ribosome modulation factor (71 aa).

It belongs to the ribosome modulation factor family.

It is found in the cytoplasm. During stationary phase, converts 70S ribosomes to an inactive dimeric form (100S ribosomes). The polypeptide is Ribosome modulation factor (Pseudomonas savastanoi pv. phaseolicola (strain 1448A / Race 6) (Pseudomonas syringae pv. phaseolicola (strain 1448A / Race 6))).